Consider the following 55-residue polypeptide: Variant surface glycoprotein ETAT 1.2 (55 aa).

A glycan (N-linked (GlcNAc...) asparagine) is linked at asparagine 34. Asparagine 38 is lipidated: GPI-anchor amidated asparagine. Positions 39–55 (NSFAIKTSTLLLAVLLF) are cleaved as a propeptide — removed in mature form.

It is found in the cell membrane. VSG forms a coat on the surface of the parasite. The trypanosome evades the immune response of the host by expressing a series of antigenically distinct VSGs from an estimated 1000 VSG genes. In Trypanosoma brucei rhodesiense, this protein is Variant surface glycoprotein ETAT 1.2.